The chain runs to 432 residues: Enolase (432 aa).

Position 163 (Gln163) interacts with (2R)-2-phosphoglycerate. The Proton donor role is filled by Glu205. Positions 242, 288, and 315 each coordinate Mg(2+). 4 residues coordinate (2R)-2-phosphoglycerate: Lys340, Arg369, Ser370, and Lys391. Catalysis depends on Lys340, which acts as the Proton acceptor.

This sequence belongs to the enolase family. In terms of assembly, homodimer. Mg(2+) is required as a cofactor.

The protein resides in the cytoplasm. It localises to the secreted. The protein localises to the cell surface. The enzyme catalyses (2R)-2-phosphoglycerate = phosphoenolpyruvate + H2O. It participates in carbohydrate degradation; glycolysis; pyruvate from D-glyceraldehyde 3-phosphate: step 4/5. Its activity is regulated as follows. The covalent binding to the substrate causes inactivation of the enzyme, and possibly serves as a signal for the export of the protein. In terms of biological role, catalyzes the reversible conversion of 2-phosphoglycerate (2-PG) into phosphoenolpyruvate (PEP). It is essential for the degradation of carbohydrates via glycolysis. This Enterococcus hirae protein is Enolase.